A 316-amino-acid chain; its full sequence is tRNA-cytidine(32) 2-sulfurtransferase (316 aa).

Positions 45 to 50 match the PP-loop motif motif; the sequence is SGGKDS. 3 residues coordinate [4Fe-4S] cluster: Cys-120, Cys-123, and Cys-211.

Belongs to the TtcA family. In terms of assembly, homodimer. The cofactor is Mg(2+). It depends on [4Fe-4S] cluster as a cofactor.

Its subcellular location is the cytoplasm. It catalyses the reaction cytidine(32) in tRNA + S-sulfanyl-L-cysteinyl-[cysteine desulfurase] + AH2 + ATP = 2-thiocytidine(32) in tRNA + L-cysteinyl-[cysteine desulfurase] + A + AMP + diphosphate + H(+). Its pathway is tRNA modification. Catalyzes the ATP-dependent 2-thiolation of cytidine in position 32 of tRNA, to form 2-thiocytidine (s(2)C32). The sulfur atoms are provided by the cysteine/cysteine desulfurase (IscS) system. The protein is tRNA-cytidine(32) 2-sulfurtransferase of Shewanella sediminis (strain HAW-EB3).